Consider the following 159-residue polypeptide: Globin C, coelomic (159 aa).

Gly2 bears the N-acetylglycine mark. The 147-residue stretch at Asp12–Gly158 folds into the Globin domain. Heme b-binding residues include His74 and His105.

Belongs to the globin family. Monomer.

The sequence is that of Globin C, coelomic from Molpadia arenicola (Sea cucumber).